A 268-amino-acid polypeptide reads, in one-letter code: 14-3-3-like protein GF14 upsilon (268 aa).

2 positions are modified to phosphoserine: S69 and S192. T213 is modified (phosphothreonine). The disordered stretch occupies residues 243–268 (EAGDDIKEAPKEVQKVDEQAQPPPSQ). A compositionally biased stretch (basic and acidic residues) spans 246–260 (DDIKEAPKEVQKVDE). At S267 the chain carries Phosphoserine.

This sequence belongs to the 14-3-3 family. Interacts with EDE1. Interacts with DREB1A and DREB1B in the nucleus. Interacts with CINV1.

Its subcellular location is the cytoplasm. It localises to the nucleus. Is associated with a DNA binding complex that binds to the G box, a well-characterized cis-acting DNA regulatory element found in plant genes. May be involved in cell cycle regulation by binding to soluble EDE1 and sequestering it in an inactive form during the early stages of mitosis. This is 14-3-3-like protein GF14 upsilon (GRF5) from Arabidopsis thaliana (Mouse-ear cress).